The chain runs to 291 residues: Taste receptor type 2 member 16 (291 aa).

Met1 is a topological domain (extracellular). Residues 2–22 traverse the membrane as a helical segment; it reads IPIQLTVFFMIIYVLESLTII. Topologically, residues 23 to 41 are cytoplasmic; that stretch reads VQSSLIVAVLGREWLQVRR. A helical transmembrane segment spans residues 42–62; the sequence is LMPVDMILISLGISRFCLQWA. The Extracellular segment spans residues 63–84; it reads SMLNNFCSYFNLNYVLCNLTIT. The N-linked (GlcNAc...) asparagine glycan is linked to Asn80. The chain crosses the membrane as a helical span at residues 85 to 105; that stretch reads WEFFNILTFWLNSLLTVFYCI. The Cytoplasmic portion of the chain corresponds to 106–125; the sequence is KASSFTHHIFLWLRWRILRL. Residues 126–146 traverse the membrane as a helical segment; the sequence is FPWILLGSLMITCVTIIPSAI. Residues 147 to 182 lie on the Extracellular side of the membrane; the sequence is GNYIQIQLLTMEHLPRNSTVTDKLEKFHQYQFQAHT. N-linked (GlcNAc...) asparagine glycosylation occurs at Asn163. Residues 183–203 traverse the membrane as a helical segment; sequence VALVIPFILFLASTILLMASL. The Cytoplasmic segment spans residues 204-228; that stretch reads TKQIQHHSTGHCNPSMKAHFTALRS. The chain crosses the membrane as a helical span at residues 229-249; that stretch reads LAVLFIVFTSYFLTILITIIG. Residues 250–257 lie on the Extracellular side of the membrane; sequence TLFDKRCW. A helical transmembrane segment spans residues 258–278; that stretch reads LWVWEAFVYAFILMHSTSLML. The Cytoplasmic portion of the chain corresponds to 279–291; sequence SSPTLKRILKGKC.

Belongs to the G-protein coupled receptor T2R family. As to quaternary structure, interacts with RTP3 and RTP4.

Its subcellular location is the cell membrane. Functionally, receptor that may play a role in the perception of bitterness and is gustducin-linked. May play a role in sensing the chemical composition of the gastrointestinal content. The activity of this receptor may stimulate alpha gustducin, mediate PLC-beta-2 activation and lead to the gating of TRPM5. The chain is Taste receptor type 2 member 16 (TAS2R16) from Pan paniscus (Pygmy chimpanzee).